Here is a 356-residue protein sequence, read N- to C-terminus: GTPase Obg (356 aa).

Residues 1–159 (MKFLDQAKVY…RWIWLRLKLI (159 aa)) form the Obg domain. In terms of domain architecture, OBG-type G spans 160 to 328 (ADAGLVGLPN…ALYAIAQHLG (169 aa)). GTP-binding positions include 166 to 173 (GLPNAGKS), 191 to 195 (FTTLH), 213 to 216 (DIPG), 280 to 283 (NKID), and 309 to 311 (SGV). Serine 173 and threonine 193 together coordinate Mg(2+). The segment at 333–356 (DIPLPKPSNADEEDPDTDQPWSPV) is disordered.

It belongs to the TRAFAC class OBG-HflX-like GTPase superfamily. OBG GTPase family. As to quaternary structure, monomer. The cofactor is Mg(2+).

The protein localises to the cytoplasm. Its function is as follows. An essential GTPase which binds GTP, GDP and possibly (p)ppGpp with moderate affinity, with high nucleotide exchange rates and a fairly low GTP hydrolysis rate. Plays a role in control of the cell cycle, stress response, ribosome biogenesis and in those bacteria that undergo differentiation, in morphogenesis control. The sequence is that of GTPase Obg from Hyphomonas neptunium (strain ATCC 15444).